The chain runs to 240 residues: MLRHDGRSNTQLRSVRILRNYIKHAEGSVLIEVGDTKVICTASVEERIPPFKKDSGEGWVTAEYSMLPRATAVRNQRDISKLKLNGRSSEIQRLIGRSLRTIVDLKLLGERTITIDCDVIQADGGTRTASITGSYVALVDACRTLVKKGLISKMPVTGTVAATSVGIVNGEELLDLCYIEDSNAEVDMNVIKTDKGEFIEIQATGEKSSFSKKQLDQLLNLAESGIHELIKAQNEVLWKD.

Phosphate contacts are provided by residues arginine 87 and 125-127; that span reads GTR.

This sequence belongs to the RNase PH family. As to quaternary structure, homohexameric ring arranged as a trimer of dimers.

The catalysed reaction is tRNA(n+1) + phosphate = tRNA(n) + a ribonucleoside 5'-diphosphate. Functionally, phosphorolytic 3'-5' exoribonuclease that plays an important role in tRNA 3'-end maturation. Removes nucleotide residues following the 3'-CCA terminus of tRNAs; can also add nucleotides to the ends of RNA molecules by using nucleoside diphosphates as substrates, but this may not be physiologically important. Probably plays a role in initiation of 16S rRNA degradation (leading to ribosome degradation) during starvation. The chain is Ribonuclease PH from Ruminiclostridium cellulolyticum (strain ATCC 35319 / DSM 5812 / JCM 6584 / H10) (Clostridium cellulolyticum).